Consider the following 344-residue polypeptide: Lipase chaperone (344 aa).

A helical transmembrane segment spans residues 14 to 34 (AMVYGVVGLAAIAGVAMWSGA).

The protein belongs to the lipase chaperone family.

It is found in the cell inner membrane. Its function is as follows. May be involved in the folding of the extracellular lipase during its passage through the periplasm. This Burkholderia lata (strain ATCC 17760 / DSM 23089 / LMG 22485 / NCIMB 9086 / R18194 / 383) protein is Lipase chaperone.